The following is a 227-amino-acid chain: Germin-like protein subfamily T member 3 (227 aa).

The N-terminal stretch at methionine 1–threonine 26 is a signal peptide. Cysteine 44 and cysteine 59 form a disulfide bridge. Residues serine 71 to asparagine 219 form the Cupin type-1 domain. Asparagine 78 carries an N-linked (GlcNAc...) asparagine glycan. Mn(2+)-binding residues include histidine 119, histidine 121, and glutamate 126. Residue asparagine 143 is glycosylated (N-linked (GlcNAc...) asparagine). Histidine 165 lines the Mn(2+) pocket.

This sequence belongs to the germin family. In terms of assembly, oligomer (believed to be a pentamer but probably hexamer).

Its subcellular location is the secreted. It is found in the extracellular space. It localises to the apoplast. Functionally, may play a role in plant defense. Probably has no oxalate oxidase activity even if the active site is conserved. This chain is Germin-like protein subfamily T member 3, found in Arabidopsis thaliana (Mouse-ear cress).